Consider the following 461-residue polypeptide: UPF0210 protein Ddes_0622 (461 aa).

The protein belongs to the UPF0210 family. Homodimer.

This is UPF0210 protein Ddes_0622 from Desulfovibrio desulfuricans (strain ATCC 27774 / DSM 6949 / MB).